The primary structure comprises 1977 residues: Echinoderm microtubule-associated protein-like 5 (1977 aa).

11 WD repeats span residues 59 to 100 (GHSD…TVSV), 104 to 145 (VHTH…MLSM), 148 to 187 (GHTD…LTPK), 195 to 233 (GDLQ…RTIQ), 235 to 273 (AHTA…TVID), 280 to 321 (GYKG…LIMQ), 323 to 362 (HCEG…LIAR), 364 to 403 (NMDE…EVVH), 406 to 445 (DRKE…KKVG), 449 to 488 (GSLS…EVTS), and 561 to 601 (GHSA…KLKD). The tract at residues 609–629 (ESLTESNSDESDSDLSDVPEL) is disordered. Residues 615 to 629 (NSDESDSDLSDVPEL) show a composition bias toward acidic residues. WD repeat units lie at residues 725 to 766 (GHDD…PLSI), 770 to 811 (YHQY…KLSV), 814 to 853 (GSKD…LIGR), 861 to 900 (GKND…KTVK), 901 to 940 (AHDG…KTYA), 996 to 1035 (HMEG…CMLA), 1038 to 1077 (KLKK…DLVS), 1080 to 1120 (HRKD…RVGV), and 1236 to 1276 (AHST…HREK). Disordered regions lie at residues 1274-1299 (REKK…SDVT) and 1323-1363 (PHLQ…NVGK). A compositionally biased stretch (acidic residues) spans 1281-1294 (SEESDTDSEEDGGY). A compositionally biased stretch (basic and acidic residues) spans 1326–1337 (QQKEPSVDERQG). WD repeat units follow at residues 1420-1471 (EHND…TLSI), 1475-1516 (SHSK…KIAS), 1519-1558 (GHNQ…LLSK), 1568-1606 (ARMQ…RVVA), 1608-1654 (AHNG…RAFR), 1699-1739 (GHVD…MLNK), 1741-1782 (NLGH…GKKR), 1783-1822 (DRRC…TLNR), 1895-1934 (AEKA…KFAK), and 1940-1977 (GHSP…HTPH).

The protein belongs to the WD repeat EMAP family. In terms of tissue distribution, highly expressed in brain, especially in hippocampus, cerebellum and olfactory bulb (at protein level).

Its subcellular location is the cytoplasm. The protein resides in the cytoskeleton. May modify the assembly dynamics of microtubules, such that microtubules are slightly longer, but more dynamic. This chain is Echinoderm microtubule-associated protein-like 5 (Eml5), found in Rattus norvegicus (Rat).